The following is a 330-amino-acid chain: Acrylyl-CoA reductase AcuI (330 aa).

NADP(+) contacts are provided by residues Tyr-44, 159–162, 181–183, Arg-201, Leu-247, and Ser-272; these read AGGV and TGR.

It belongs to the zinc-containing alcohol dehydrogenase family. Acrylyl-CoA reductase subfamily. In terms of assembly, homodimer.

It is found in the cytoplasm. It carries out the reaction propanoyl-CoA + NADP(+) = acryloyl-CoA + NADPH + H(+). Probably catalyzes the NADPH-dependent reduction of acrylyl-CoA to propanoyl-CoA. Restores acrylate resistance when expressed in an E.coli strain K12 acuI deletion. This Ruegeria pomeroyi (strain ATCC 700808 / DSM 15171 / DSS-3) (Silicibacter pomeroyi) protein is Acrylyl-CoA reductase AcuI (acuI).